A 925-amino-acid chain; its full sequence is Ectonucleotide pyrophosphatase/phosphodiesterase family member 1 (925 aa).

The segment covering 1–17 (MERDGCAGGGSRGGEGG) has biased composition (gly residues). The interval 1–43 (MERDGCAGGGSRGGEGGRAPREGPAGNGRDRGRSHAAEAPGDP) is disordered. Over 1–76 (MERDGCAGGG…RTAKDPNTYK (76 aa)) the chain is Cytoplasmic. Residues 45-52 (AAASLLAP) carry the Di-leucine motif motif. A helical; Signal-anchor for type II membrane protein membrane pass occupies residues 77–97 (VLSLVLSVCVLTTILGCIFGL). The Extracellular segment spans residues 98–925 (KPSCAKEVKS…THLPTFSQED (828 aa)). 2 consecutive SMB domains span residues 104 to 144 (EVKS…IEPE) and 145 to 189 (HIWT…GEKS). 10 disulfides stabilise this stretch: C108-C122, C112-C140, C120-C133, C126-C132, C149-C166, C154-C184, C164-C177, C170-C176, C195-C241, and C203-C415. N-linked (GlcNAc...) asparagine glycosylation is present at N179. Residues 191–591 (VEEPCESINE…APNNGTHGSL (401 aa)) are phosphodiesterase. AMP-binding residues include D218, T256, and N277. The Zn(2+) site is built by D218 and T256. T256 functions as the AMP-threonine intermediate in the catalytic mechanism. T256 and N277 together coordinate CMP. DTMP is bound by residues T256 and N277. GMP is bound by residues T256 and N277. T256 carries the phosphothreonine modification. An N-linked (GlcNAc...) asparagine glycan is attached at N285. 3 residues coordinate GMP: L290, K295, and Y340. Residues K295 and Y340 each coordinate AMP. CMP contacts are provided by K295 and Y340. Y340 contributes to the dTMP binding site. Residue N341 is glycosylated (N-linked (GlcNAc...) asparagine). An AMP-binding site is contributed by D376. Residues D376, H380, D423, and H424 each coordinate Zn(2+). D376 is a CMP binding site. Position 376 (D376) interacts with dTMP. D376 is a binding site for GMP. 2',3'-cGAMP is bound at residue H380. H424 provides a ligand contact to AMP. H424 is a CMP binding site. DTMP is bound at residue H424. GMP is bound at residue H424. 6 cysteine pairs are disulfide-bonded: C431–C530, C480–C868, C614–C672, C626–C726, C628–C711, and C838–C848. N-linked (GlcNAc...) asparagine glycosylation occurs at N477. S532 contacts 2',3'-cGAMP. AMP is bound at residue H535. H535 provides a ligand contact to Zn(2+). Position 535 (H535) interacts with CMP. H535 is a binding site for dTMP. H535 lines the GMP pocket. Residues N585, N643, N700, N731, and N748 are each glycosylated (N-linked (GlcNAc...) asparagine). The tract at residues 597-647 (NPVYTPKHPKEVHPLVQCPFTRNPRDNLGCSCNPSILPIEDFQTQFNLTVA) is linker. The nuclease-like domain stretch occupies residues 654–925 (HETLPYGRPR…THLPTFSQED (272 aa)). Ca(2+) contacts are provided by D800, D802, D804, R806, and D808.

The protein belongs to the nucleotide pyrophosphatase/phosphodiesterase family. Homodimer. Interacts with INSR; leading to inhibit INSR autophosphorylation and subsequent activation of INSR kinase activity. In terms of assembly, monomeric. Zn(2+) is required as a cofactor. Autophosphorylated as part of the catalytic cycle of phosphodiesterase/pyrophosphatase activity. In terms of processing, N-glycosylated. Post-translationally, the secreted form is produced through cleavage at Lys-103 by intracellular processing. In terms of tissue distribution, expressed in plasma cells and also in a number of non-lymphoid tissues, including the distal convoluted tubule of the kidney, chondrocytes and epididymis. Expressed in melanocytes but not in keratinocytes.

The protein resides in the cell membrane. The protein localises to the basolateral cell membrane. It localises to the secreted. The enzyme catalyses Hydrolytically removes 5'-nucleotides successively from the 3'-hydroxy termini of 3'-hydroxy-terminated oligonucleotides.. The catalysed reaction is a ribonucleoside 5'-triphosphate + H2O = a ribonucleoside 5'-phosphate + diphosphate + H(+). It carries out the reaction ATP + H2O = AMP + diphosphate + H(+). It catalyses the reaction UTP + H2O = UMP + diphosphate + H(+). The enzyme catalyses GTP + H2O = GMP + diphosphate + H(+). The catalysed reaction is CTP + H2O = CMP + diphosphate + H(+). It carries out the reaction 2',3'-cGAMP + 2 H2O = GMP + AMP + 2 H(+). It catalyses the reaction P(1),P(4)-bis(5'-adenosyl) tetraphosphate + H2O = AMP + ATP + 2 H(+). The enzyme catalyses 3',5'-cyclic AMP + H2O = AMP + H(+). Its activity is regulated as follows. At low concentrations of ATP, a phosphorylated intermediate is formed which inhibits further hydrolysis. In terms of biological role, nucleotide pyrophosphatase that generates diphosphate (PPi) and functions in bone mineralization and soft tissue calcification by regulating pyrophosphate levels. PPi inhibits bone mineralization and soft tissue calcification by binding to nascent hydroxyapatite crystals, thereby preventing further growth of these crystals. Preferentially hydrolyzes ATP, but can also hydrolyze other nucleoside 5' triphosphates such as GTP, CTP and UTP to their corresponding monophosphates with release of pyrophosphate, as well as diadenosine polyphosphates, and also 3',5'-cAMP to AMP. May also be involved in the regulation of the availability of nucleotide sugars in the endoplasmic reticulum and Golgi, and the regulation of purinergic signaling. Inhibits ectopic joint calcification and maintains articular chondrocytes by repressing hedgehog signaling; it is however unclear whether hedgehog inhibition is direct or indirect. Appears to modulate insulin sensitivity and function. Also involved in melanogenesis. Also able to hydrolyze 2',3'-cGAMP (cyclic GMP-AMP), a second messenger that activates TMEM173/STING and triggers type-I interferon production. 2',3'-cGAMP degradation takes place in the lumen or extracellular space, and not in the cytosol where it is produced; the role of 2',3'-cGAMP hydrolysis is therefore unclear. Not able to hydrolyze the 2',3'-cGAMP linkage isomer 3'-3'-cGAMP. The protein is Ectonucleotide pyrophosphatase/phosphodiesterase family member 1 of Homo sapiens (Human).